Consider the following 907-residue polypeptide: MITKLFTKIIGSRNDRTVKALKKIVKQINELEPQFASLADVDLQAKTVEFRQRLEKGEELDSLLPEAFATVREASKRVFAMRHFDVQMMGGIVLNNNQIAEMKTGEGKTLTATLPAYLNALTGQGVHIVTVNDYLARRDAEWSRPLFAFLGMTVGCNLSGMSHEEKQAAYACDITYGTNNEFGFDYLRDNMAFAAEQRVQRPLYYALVDEVDSVLIDEARTPLIISGAAEDSSELYIKINTLVPLLQKQDKEDSEEYQGNGHYTVDEKARQAYLTENGQIFVEGWLKQQGLMGEDDSLFSVANITLLHHVNAALRANTLFERDVDYIVKDDEVIIVDEHTGRTMAGRRWSEGLHQAIEAKEGAKIRNENQTLASITFQNYFRLYEKLAGMTGTADTEAYEFQQIYGLETVVLPTNRPMIRDDMGDLVYLTEQEKYDAIIEDIKIRVAEQRPVLVGTISIENSELLSNILTKEGIEHKVLNAKFHAQEAQIVAQAGRPSAVTIATNMAGRGTDIVLGGSWQAEIDALENPTAEQIATIKSEWQVRHDAVITSGGLHIIGTERHESRRIDNQLRGRSGRQGDPGSSRFYLSMEDSLMRIFASDRVSGMMKKLGMEHGEAIEHPWVSKAIENAQRKVEGRNFDIRKNLLEFDDVANDQRKVVYEQRNELLESADISETIKLIRTDVLDRVIDQYIAPHSLDESWDIAGLELRLRTDFAIDLPIAQWIKEDDKLYEEKIRERIISEIEASYAHKEELAGHDVLRQFEKSVMLQTLDNLWKEHLAAMDHLRQGIHLRGYAQKNPKQEYKREAFELFTQMLEALKQQVVSVLCRIQVQEPDVDAIEEQRRQSDSAQVRTYSHEEINALAEDEAESVDGQAVEPFVRDGAKIGRNDPCPCGSGKKYKHCHGKLD.

ATP-binding positions include glutamine 87, 105–109 (GEGKT), and aspartate 512. Cysteine 891, cysteine 893, cysteine 902, and histidine 903 together coordinate Zn(2+).

Belongs to the SecA family. As to quaternary structure, monomer and homodimer. Part of the essential Sec protein translocation apparatus which comprises SecA, SecYEG and auxiliary proteins SecDF-YajC and YidC. It depends on Zn(2+) as a cofactor.

It localises to the cell inner membrane. It is found in the cytoplasm. It carries out the reaction ATP + H2O + cellular proteinSide 1 = ADP + phosphate + cellular proteinSide 2.. Its function is as follows. Part of the Sec protein translocase complex. Interacts with the SecYEG preprotein conducting channel. Has a central role in coupling the hydrolysis of ATP to the transfer of proteins into and across the cell membrane, serving both as a receptor for the preprotein-SecB complex and as an ATP-driven molecular motor driving the stepwise translocation of polypeptide chains across the membrane. The polypeptide is Protein translocase subunit SecA (Tolumonas auensis (strain DSM 9187 / NBRC 110442 / TA 4)).